The chain runs to 327 residues: Glycerol-3-phosphate acyltransferase (327 aa).

A run of 5 helical transmembrane segments spans residues 3–23, 52–72, 78–98, 112–132, and 152–172; these read SLLW…LLFA, VGVL…AVAL, TVFH…SCFL, VFLP…LAVI, and MLLL…MVLV. 2 disordered regions span residues 184–212 and 233–327; these read SRGE…EAAA and PSTE…SSGQ. Residues 199–212 show a composition bias toward low complexity; the sequence is AQGTDAGAAPEAAA. The segment covering 237–246 has biased composition (polar residues); the sequence is AAPSQETSDA. The segment covering 259–271 has biased composition (basic and acidic residues); sequence EGDKRENEEHDNA.

It belongs to the PlsY family. Probably interacts with PlsX.

It is found in the cell inner membrane. It catalyses the reaction an acyl phosphate + sn-glycerol 3-phosphate = a 1-acyl-sn-glycero-3-phosphate + phosphate. The protein operates within lipid metabolism; phospholipid metabolism. Its function is as follows. Catalyzes the transfer of an acyl group from acyl-phosphate (acyl-PO(4)) to glycerol-3-phosphate (G3P) to form lysophosphatidic acid (LPA). This enzyme utilizes acyl-phosphate as fatty acyl donor, but not acyl-CoA or acyl-ACP. The polypeptide is Glycerol-3-phosphate acyltransferase (Nitratidesulfovibrio vulgaris (strain ATCC 29579 / DSM 644 / CCUG 34227 / NCIMB 8303 / VKM B-1760 / Hildenborough) (Desulfovibrio vulgaris)).